The chain runs to 402 residues: Plasminogen activator inhibitor 1 (402 aa).

An N-terminal signal peptide occupies residues 1–23; it reads MRMSLVFACLAMGLALTFAEGSA. N-linked (GlcNAc...) asparagine glycans are attached at residues Asn-232, Asn-288, and Asn-352.

It belongs to the serpin family. Forms a heterodimer with TMPRSS7. Interacts with VTN. Binds LRP1B; binding is followed by internalization and degradation. Interacts with PPP1CB. In complex with PLAU/uPA, interacts with PLAUR/uPAR. Interacts with SORL1 and LRP1, either alone or in complex with PLAU; these interactions are abolished in the presence of LRPAP1/RAP. The ternary complex composed of PLAUR-PLAU-PAI1 also interacts with SORL1. Interacts with PLAT/tPA. Also interacts with SORL1, when complexed to PLAT/tPA.

The protein resides in the secreted. Its function is as follows. Serine protease inhibitor. Inhibits TMPRSS7. Is a primary inhibitor of tissue-type plasminogen activator (PLAT) and urokinase-type plasminogen activator (PLAU). As PLAT inhibitor, it is required for fibrinolysis down-regulation and is responsible for the controlled degradation of blood clots. As PLAU inhibitor, it is involved in the regulation of cell adhesion and spreading. Acts as a regulator of cell migration, independently of its role as protease inhibitor. It is required for stimulation of keratinocyte migration during cutaneous injury repair. It is involved in cellular and replicative senescence. Plays a role in alveolar type 2 cells senescence in the lung. Is involved in the regulation of cementogenic differentiation of periodontal ligament stem cells, and regulates odontoblast differentiation and dentin formation during odontogenesis. The polypeptide is Plasminogen activator inhibitor 1 (SERPINE1) (Sus scrofa (Pig)).